Reading from the N-terminus, the 685-residue chain is DNA ligase (685 aa).

Residues 47-51 (DSEYD), 96-97 (SL), and Glu-125 contribute to the NAD(+) site. Lys-127 functions as the N6-AMP-lysine intermediate in the catalytic mechanism. Residues Arg-148, Glu-185, Lys-304, and Lys-328 each contribute to the NAD(+) site. Positions 422, 425, 440, and 446 each coordinate Zn(2+). Residues 605–685 (ADAQPLKGQT…ELLALLAANA (81 aa)) enclose the BRCT domain.

Belongs to the NAD-dependent DNA ligase family. LigA subfamily. Requires Mg(2+) as cofactor. It depends on Mn(2+) as a cofactor.

It carries out the reaction NAD(+) + (deoxyribonucleotide)n-3'-hydroxyl + 5'-phospho-(deoxyribonucleotide)m = (deoxyribonucleotide)n+m + AMP + beta-nicotinamide D-nucleotide.. Its function is as follows. DNA ligase that catalyzes the formation of phosphodiester linkages between 5'-phosphoryl and 3'-hydroxyl groups in double-stranded DNA using NAD as a coenzyme and as the energy source for the reaction. It is essential for DNA replication and repair of damaged DNA. The protein is DNA ligase of Shewanella baltica (strain OS195).